The sequence spans 336 residues: D-aspartate oxidase (336 aa).

The FAD site is built by glutamate 34, lysine 35, threonine 41, serine 42, glycine 304, valine 308, and serine 309. The Microbody targeting signal motif lies at 334-336; it reads SKL.

It belongs to the DAMOX/DASOX family. As to quaternary structure, monomer. FAD serves as cofactor.

Its subcellular location is the peroxisome matrix. The enzyme catalyses D-aspartate + O2 + H2O = oxaloacetate + H2O2 + NH4(+). It carries out the reaction D-glutamate + O2 + H2O = H2O2 + 2-oxoglutarate + NH4(+). Functionally, selectively catalyzes the oxidative deamination of acidic amino acids. Suppresses the level of D-aspartate in the brain, an amino acid that can act as an agonist for glutamate receptors. Protects the organism from the toxicity of D-amino acids. May also function in the intestine. This is D-aspartate oxidase from Octopus vulgaris (Common octopus).